The following is a 320-amino-acid chain: Ferrochelatase (320 aa).

The Fe cation site is built by histidine 194 and glutamate 275.

This sequence belongs to the ferrochelatase family. Monomer.

Its subcellular location is the cytoplasm. It carries out the reaction heme b + 2 H(+) = protoporphyrin IX + Fe(2+). It participates in porphyrin-containing compound metabolism; protoheme biosynthesis; protoheme from protoporphyrin-IX: step 1/1. Functionally, catalyzes the ferrous insertion into protoporphyrin IX. In Salmonella arizonae (strain ATCC BAA-731 / CDC346-86 / RSK2980), this protein is Ferrochelatase.